Reading from the N-terminus, the 340-residue chain is tRNA dimethylallyltransferase (340 aa).

Residues 1 to 25 (MDQNRSPNGRDCREPPSPSSTARPG) form a disordered region. Position 31–38 (31–38 (GPTATGKS)) interacts with ATP. A substrate-binding site is contributed by 33-38 (TATGKS). Positions 56–59 (DSRQ) are interaction with substrate tRNA.

It belongs to the IPP transferase family. Monomer. The cofactor is Mg(2+).

The enzyme catalyses adenosine(37) in tRNA + dimethylallyl diphosphate = N(6)-dimethylallyladenosine(37) in tRNA + diphosphate. In terms of biological role, catalyzes the transfer of a dimethylallyl group onto the adenine at position 37 in tRNAs that read codons beginning with uridine, leading to the formation of N6-(dimethylallyl)adenosine (i(6)A). In Synechococcus sp. (strain JA-3-3Ab) (Cyanobacteria bacterium Yellowstone A-Prime), this protein is tRNA dimethylallyltransferase.